The sequence spans 419 residues: UDP-N-acetylglucosamine 1-carboxyvinyltransferase 2 (419 aa).

Residue 22–23 (KN) participates in phosphoenolpyruvate binding. A UDP-N-acetyl-alpha-D-glucosamine-binding site is contributed by Arg-92. Cys-116 (proton donor) is an active-site residue. Cys-116 bears the 2-(S-cysteinyl)pyruvic acid O-phosphothioketal mark. UDP-N-acetyl-alpha-D-glucosamine contacts are provided by residues 121-125 (RPIDL), Asp-306, and Val-328.

It belongs to the EPSP synthase family. MurA subfamily.

Its subcellular location is the cytoplasm. It catalyses the reaction phosphoenolpyruvate + UDP-N-acetyl-alpha-D-glucosamine = UDP-N-acetyl-3-O-(1-carboxyvinyl)-alpha-D-glucosamine + phosphate. It functions in the pathway cell wall biogenesis; peptidoglycan biosynthesis. In terms of biological role, cell wall formation. Adds enolpyruvyl to UDP-N-acetylglucosamine. The chain is UDP-N-acetylglucosamine 1-carboxyvinyltransferase 2 from Carboxydothermus hydrogenoformans (strain ATCC BAA-161 / DSM 6008 / Z-2901).